The following is a 146-amino-acid chain: Cyanate hydratase (146 aa).

Residues R87, E90, and S113 contribute to the active site.

Belongs to the cyanase family.

The enzyme catalyses cyanate + hydrogencarbonate + 3 H(+) = NH4(+) + 2 CO2. Its function is as follows. Catalyzes the reaction of cyanate with bicarbonate to produce ammonia and carbon dioxide. The sequence is that of Cyanate hydratase from Synechococcus elongatus (strain ATCC 33912 / PCC 7942 / FACHB-805) (Anacystis nidulans R2).